A 152-amino-acid chain; its full sequence is Methylglyoxal synthase (152 aa).

The region spanning 6–152 (RKISARKSIA…YDGYLAERLA (147 aa)) is the MGS-like domain. Residues His19, Lys23, 45 to 48 (TGTT), and 65 to 66 (SG) each bind substrate. Asp71 (proton donor/acceptor) is an active-site residue. His98 serves as a coordination point for substrate.

Belongs to the methylglyoxal synthase family.

It carries out the reaction dihydroxyacetone phosphate = methylglyoxal + phosphate. In terms of biological role, catalyzes the formation of methylglyoxal from dihydroxyacetone phosphate. The polypeptide is Methylglyoxal synthase (Actinobacillus pleuropneumoniae serotype 3 (strain JL03)).